The chain runs to 222 residues: Probable transaldolase (222 aa).

Catalysis depends on Lys-91, which acts as the Schiff-base intermediate with substrate.

This sequence belongs to the transaldolase family. Type 3B subfamily.

It is found in the cytoplasm. It catalyses the reaction D-sedoheptulose 7-phosphate + D-glyceraldehyde 3-phosphate = D-erythrose 4-phosphate + beta-D-fructose 6-phosphate. It functions in the pathway carbohydrate degradation; pentose phosphate pathway; D-glyceraldehyde 3-phosphate and beta-D-fructose 6-phosphate from D-ribose 5-phosphate and D-xylulose 5-phosphate (non-oxidative stage): step 2/3. Its function is as follows. Transaldolase is important for the balance of metabolites in the pentose-phosphate pathway. This is Probable transaldolase from Chlorobium limicola (strain DSM 245 / NBRC 103803 / 6330).